Consider the following 221-residue polypeptide: 21 kDa seed protein (221 aa).

The signal sequence occupies residues 1 to 26; it reads MKTATAVVLLLFAFTSKSYFFGVANA. Cysteines 69 and 116 form a disulfide.

Belongs to the protease inhibitor I3 (leguminous Kunitz-type inhibitor) family.

The polypeptide is 21 kDa seed protein (ASP) (Theobroma cacao (Cacao)).